A 180-amino-acid polypeptide reads, in one-letter code: Large ribosomal subunit protein uL5 (180 aa).

The protein belongs to the universal ribosomal protein uL5 family. As to quaternary structure, part of the 50S ribosomal subunit; part of the 5S rRNA/L5/L18/L25 subcomplex. Contacts the 5S rRNA and the P site tRNA. Forms a bridge to the 30S subunit in the 70S ribosome.

In terms of biological role, this is one of the proteins that bind and probably mediate the attachment of the 5S RNA into the large ribosomal subunit, where it forms part of the central protuberance. In the 70S ribosome it contacts protein S13 of the 30S subunit (bridge B1b), connecting the 2 subunits; this bridge is implicated in subunit movement. Contacts the P site tRNA; the 5S rRNA and some of its associated proteins might help stabilize positioning of ribosome-bound tRNAs. This Cupriavidus necator (strain ATCC 17699 / DSM 428 / KCTC 22496 / NCIMB 10442 / H16 / Stanier 337) (Ralstonia eutropha) protein is Large ribosomal subunit protein uL5.